The chain runs to 112 residues: Gonad-inhibiting hormone (112 aa).

The first 31 residues, 1–31 (MVTRVGSGFSVQRVWLLLVIVVVLCGSVTQQ), serve as a signal peptide directing secretion. Intrachain disulfides connect cysteine 41–cysteine 78, cysteine 58–cysteine 74, and cysteine 61–cysteine 87. Residue alanine 109 is modified to Alanine amide.

In terms of tissue distribution, produced in the eyestalk X-organ sinus gland complex of male and female lobsters.

The protein resides in the secreted. Inhibits vitellogenesis in female animals. Plays a prominent role in the regulation of reproduction/molting processes. This chain is Gonad-inhibiting hormone, found in Homarus americanus (American lobster).